Here is a 358-residue protein sequence, read N- to C-terminus: UDP-N-acetylglucosamine--N-acetylmuramyl-(pentapeptide) pyrophosphoryl-undecaprenol N-acetylglucosamine transferase (358 aa).

UDP-N-acetyl-alpha-D-glucosamine is bound by residues 11 to 13 (TAG), Asn-125, Arg-162, Ser-196, and Gln-288.

It belongs to the glycosyltransferase 28 family. MurG subfamily.

It is found in the cell membrane. It carries out the reaction di-trans,octa-cis-undecaprenyl diphospho-N-acetyl-alpha-D-muramoyl-L-alanyl-D-glutamyl-meso-2,6-diaminopimeloyl-D-alanyl-D-alanine + UDP-N-acetyl-alpha-D-glucosamine = di-trans,octa-cis-undecaprenyl diphospho-[N-acetyl-alpha-D-glucosaminyl-(1-&gt;4)]-N-acetyl-alpha-D-muramoyl-L-alanyl-D-glutamyl-meso-2,6-diaminopimeloyl-D-alanyl-D-alanine + UDP + H(+). It participates in cell wall biogenesis; peptidoglycan biosynthesis. Its function is as follows. Cell wall formation. Catalyzes the transfer of a GlcNAc subunit on undecaprenyl-pyrophosphoryl-MurNAc-pentapeptide (lipid intermediate I) to form undecaprenyl-pyrophosphoryl-MurNAc-(pentapeptide)GlcNAc (lipid intermediate II). The polypeptide is UDP-N-acetylglucosamine--N-acetylmuramyl-(pentapeptide) pyrophosphoryl-undecaprenol N-acetylglucosamine transferase (Leifsonia xyli subsp. xyli (strain CTCB07)).